The chain runs to 394 residues: 1-deoxy-D-xylulose 5-phosphate reductoisomerase (394 aa).

Residues Thr-14, Gly-15, Ser-16, Ile-17, Gly-40, and Asn-128 each contribute to the NADPH site. Lys-129 serves as a coordination point for 1-deoxy-D-xylulose 5-phosphate. Glu-130 is a binding site for NADPH. Mn(2+) is bound at residue Asp-154. Residues Ser-155, Glu-156, Ser-180, and His-203 each coordinate 1-deoxy-D-xylulose 5-phosphate. Residue Glu-156 coordinates Mn(2+). Residue Gly-209 coordinates NADPH. The 1-deoxy-D-xylulose 5-phosphate site is built by Ser-216, Asn-221, Lys-222, and Glu-225. Residue Glu-225 coordinates Mn(2+).

Belongs to the DXR family. Mg(2+) is required as a cofactor. It depends on Mn(2+) as a cofactor.

The catalysed reaction is 2-C-methyl-D-erythritol 4-phosphate + NADP(+) = 1-deoxy-D-xylulose 5-phosphate + NADPH + H(+). Its pathway is isoprenoid biosynthesis; isopentenyl diphosphate biosynthesis via DXP pathway; isopentenyl diphosphate from 1-deoxy-D-xylulose 5-phosphate: step 1/6. Catalyzes the NADPH-dependent rearrangement and reduction of 1-deoxy-D-xylulose-5-phosphate (DXP) to 2-C-methyl-D-erythritol 4-phosphate (MEP). This chain is 1-deoxy-D-xylulose 5-phosphate reductoisomerase, found in Xylella fastidiosa (strain M12).